Reading from the N-terminus, the 598-residue chain is Aluminum-activated malate transporter 9 (598 aa).

Transmembrane regions (helical) follow at residues 88 to 108 (IVFS…IFYQ), 117 to 137 (YSVW…GATL), 144 to 164 (ALGT…STLF), 170 to 190 (IFCT…KLYP), 194 to 214 (AYEY…ISGF), and 227 to 247 (FLLI…IYPI).

It belongs to the aromatic acid exporter (TC 2.A.85) family. In terms of tissue distribution, expressed in hypocotyls, leaves, roots, flowers, sepals and stamina. In leaves, expressed almost exclusively in mesophyll cells.

The protein resides in the vacuole membrane. Its activity is regulated as follows. Slow activation by external aluminum. Its function is as follows. Vacuolar malate channel. Has a higher selectivity for malate than for fumarate. Also exhibits a weak chloride conductance. This chain is Aluminum-activated malate transporter 9 (ALMT9), found in Arabidopsis thaliana (Mouse-ear cress).